Here is a 567-residue protein sequence, read N- to C-terminus: uncharacterized protein (567 aa).

The protein belongs to the protein kinase superfamily. ADCK protein kinase family.

This is an uncharacterized protein from Synechocystis sp. (strain ATCC 27184 / PCC 6803 / Kazusa).